A 502-amino-acid chain; its full sequence is ATP synthase subunit alpha (502 aa).

Residue 169-176 (GDRATGKT) participates in ATP binding.

The protein belongs to the ATPase alpha/beta chains family. As to quaternary structure, F-type ATPases have 2 components, CF(1) - the catalytic core - and CF(0) - the membrane proton channel. CF(1) has five subunits: alpha(3), beta(3), gamma(1), delta(1), epsilon(1). CF(0) has three main subunits: a(1), b(2) and c(9-12). The alpha and beta chains form an alternating ring which encloses part of the gamma chain. CF(1) is attached to CF(0) by a central stalk formed by the gamma and epsilon chains, while a peripheral stalk is formed by the delta and b chains.

The protein localises to the cell inner membrane. It carries out the reaction ATP + H2O + 4 H(+)(in) = ADP + phosphate + 5 H(+)(out). Functionally, produces ATP from ADP in the presence of a proton gradient across the membrane. The alpha chain is a regulatory subunit. This is ATP synthase subunit alpha from Hydrogenobaculum sp. (strain Y04AAS1).